A 252-amino-acid chain; its full sequence is Probable anguibactin biosynthesis thioesterase AngT (252 aa).

Catalysis depends on residues Ser92 and His229.

It belongs to the thioesterase family.

It functions in the pathway siderophore biosynthesis; anguibactin biosynthesis. In terms of biological role, probable thioesterase. Involved in anguibactin production, but is not essential for virulence or iron transport gene expression. This Vibrio anguillarum (strain ATCC 68554 / 775) (Listonella anguillarum) protein is Probable anguibactin biosynthesis thioesterase AngT (angT).